The following is a 409-amino-acid chain: Argininosuccinate synthase (409 aa).

Ala10–Ser18 contributes to the ATP binding site. Tyr87 is an L-citrulline binding site. Gly117 is a binding site for ATP. Thr119, Asn123, and Asp124 together coordinate L-aspartate. Asn123 serves as a coordination point for L-citrulline. 5 residues coordinate L-citrulline: Arg127, Ser175, Ser184, Glu260, and Tyr272.

Belongs to the argininosuccinate synthase family. Type 1 subfamily. In terms of assembly, homotetramer.

The protein resides in the cytoplasm. The enzyme catalyses L-citrulline + L-aspartate + ATP = 2-(N(omega)-L-arginino)succinate + AMP + diphosphate + H(+). It functions in the pathway amino-acid biosynthesis; L-arginine biosynthesis; L-arginine from L-ornithine and carbamoyl phosphate: step 2/3. This Rubrobacter xylanophilus (strain DSM 9941 / JCM 11954 / NBRC 16129 / PRD-1) protein is Argininosuccinate synthase.